Consider the following 725-residue polypeptide: MALLLPLLPLLVWAAGPPGPLGPPEHSEPPLPAEPPDALFAAGAEAYARGDWPAVVLQMERALRARAAIRARSVRCRLRCANATAVVPTDGLEPTLHDLLFFRGLLRRAACLRGCGPTQPSRYRLGEELEREFRKRSPYNYLQVAYFKINKVAKAVAAAHTFFVANPEHVEMKQNLEYYQMMAGVRESDFADLEARPHMTEFRLGVRFYSEEQPAAAVLHLEKALQEYFVADTECRALCEGPYDYEGYNYLEYNADLFQAMTDHYMQVLSCKQGCVTELASQPGREKPLEDFLPSHFNYLQFAYYNNGNYEKAIECAKTYLLFFPNDEVMNQNLAYYTAVLGEDLARPIEPRKEIQAYRQRSLMEKELLFFSYDVFGIPFVDPDTWTPEEVIPKRLREKQKVERETAARISEEIGNLMKEIETLVEEKAKESAEMSKFIREGGPLVYEGASVTMNSKSLNGSQRVVVDGVLSAEECRELQRLTNAAASAGDGYRGKTSPHTPSETFYGVTVLKALKLGQEGKVPLQSAHLYYNVTEKVRHMMESYFRLEVPLHFSYSHLVCRTAIDEKQEGRSDNSHEVHVDNCILNAEALVCVKEPPAYTFRDYSAILYLNGDFEGGAFYFTELDAKTQTAEVQPQCGRAVGFSSGSENPHGVKAVTKGQRCAIALWFTLDPRHSERERVQADDLVKMLFRTEEVDLLQETSAEQEPTAATSTAGLHAAGKDEL.

Residues 1 to 14 (MALLLPLLPLLVWA) form the signal peptide. Residues 36–69 (PDALFAAGAEAYARGDWPAVVLQMERALRARAAI) form a TPR 1 repeat. Asparagine 82 carries an N-linked (GlcNAc...) asparagine glycan. TPR repeat units follow at residues 136–169 (RSPYNYLQVAYFKINKVAKAVAAAHTFFVANPEH), 198–231 (HMTEFRLGVRFYSEEQPAAAVLHLEKALQEYFVA), and 294–327 (PSHFNYLQFAYYNNGNYEKAIECAKTYLLFFPND). Positions 394 to 441 (KRLREKQKVERETAARISEEIGNLMKEIETLVEEKAKESAEMSKFIRE) form a coiled coil. N-linked (GlcNAc...) asparagine glycans are attached at residues asparagine 460 and asparagine 533. The 115-residue stretch at 557-671 (SHLVCRTAID…RCAIALWFTL (115 aa)) folds into the Fe2OG dioxygenase domain. Positions 580, 582, and 652 each coordinate Fe cation. The active site involves arginine 662. The span at 701-715 (ETSAEQEPTAATSTA) shows a compositional bias: polar residues. The segment at 701–725 (ETSAEQEPTAATSTAGLHAAGKDEL) is disordered. Positions 722-725 (KDEL) match the Prevents secretion from ER motif.

It belongs to the leprecan family. In terms of assembly, binds unfolded collagen in a complex with CYPB and CRTAP. It depends on Fe cation as a cofactor. L-ascorbate serves as cofactor. Expressed in embryonic dermis, tendon, cartilage, liver and kidney. Expression in the kidney is restricted to the calyx. In the liver, expression is restricted to the interlobular septum.

It is found in the endoplasmic reticulum. It catalyses the reaction L-prolyl-[collagen] + 2-oxoglutarate + O2 = trans-3-hydroxy-L-prolyl-[collagen] + succinate + CO2. In terms of biological role, has prolyl 3-hydroxylase activity catalyzing the post-translational formation of 3-hydroxyproline in -Xaa-Pro-Gly-sequences in collagens, especially types IV and V. May be involved in the secretoty pathway of cells. Has growth suppressive activity in fibroblasts. The polypeptide is Prolyl 3-hydroxylase 1 (Gallus gallus (Chicken)).